The sequence spans 583 residues: GTP diphosphokinase CRSH1, chloroplastic (583 aa).

The segment covering 1–13 (MATAATTSAAAIP) has biased composition (low complexity). The disordered stretch occupies residues 1–68 (MATAATTSAA…SSSSSTPAEG (68 aa)). A chloroplast-targeting transit peptide spans 1-69 (MATAATTSAA…SSSSTPAEGG (69 aa)). Positions 19 to 39 (RRQHPHPRRPGLRPRRLHRLR) are enriched in basic residues. Over residues 40-66 (LPAQAAAAAAASSPSTSSSSSSSSTPA) the composition is skewed to low complexity. Residues 119-219 (ALARALAIAA…LELALKLDMM (101 aa)) enclose the HD domain. EF-hand domains are found at residues 473–508 (GDSN…LGAG) and 510–542 (KDAK…IELM). 10 residues coordinate Ca(2+): D486, N488, D490, R492, E497, D520, N522, D524, S526, and E531.

Belongs to the RelA/SpoT family. Expressed in roots and shoots.

It is found in the plastid. Its subcellular location is the chloroplast. It carries out the reaction GTP + ATP = guanosine 3'-diphosphate 5'-triphosphate + AMP. With respect to regulation, activated by calcium. In terms of biological role, possesses calcium-dependent ppGpp (guanosine 3'-diphosphate 5'-diphosphate) synthetase activity in vitro and is able to functionally complement E.coli relA mutants. May be involved in a rapid plant ppGpp-mediated response to pathogens and other stresses. This chain is GTP diphosphokinase CRSH1, chloroplastic, found in Oryza sativa subsp. japonica (Rice).